The chain runs to 279 residues: Large ribosomal subunit protein uL2 (279 aa).

Positions 224–279 (AMNPIDHPHGGGEGRTSGGRHPVTPWGKGTKGNRTRKSKASDKLIVRSRHAKKKGR) are disordered. The span at 269–279 (VRSRHAKKKGR) shows a compositional bias: basic residues.

This sequence belongs to the universal ribosomal protein uL2 family. Part of the 50S ribosomal subunit. Forms a bridge to the 30S subunit in the 70S ribosome.

Functionally, one of the primary rRNA binding proteins. Required for association of the 30S and 50S subunits to form the 70S ribosome, for tRNA binding and peptide bond formation. It has been suggested to have peptidyltransferase activity; this is somewhat controversial. Makes several contacts with the 16S rRNA in the 70S ribosome. In Cereibacter sphaeroides (strain ATCC 17025 / ATH 2.4.3) (Rhodobacter sphaeroides), this protein is Large ribosomal subunit protein uL2.